Reading from the N-terminus, the 414-residue chain is MPSSMSVRLFTASAAQRKKIQEGDCCVVLAGKTQGRFILIGAVARVSGYIPSYLDKDELCVVCGDKATGYHYRCITCEGCKGFFRRTIQKNLHPSYSCKYEGKCVIDKVTRNQCQECRFKKCKTVGMATDLVLDDSKRLAKRKLIEENREKRRKDEIQKSIVQRPEPTQEEWELIQVVTEAHVATNAQGSHWKQKRKFLPEDIGQAPIVNAPEGGKVDLEAFSQFTKIITPAITRVVDFAKKLPMFCELPCEDQIILLKGCCMEIMSLRAAVRYDPESETLTLNGEMAVTRGQLKNGGLGVVSDAIFDLGVSLSSFSLDDTEVALLQAVLLMSSDRPGLSSVERIEKCQEGFLLAFEHYINYRKHNIAHFWPKLLMKVTDLRMIGACHASRFLHMKVECPTELFPPLFLEVFED.

The segment at 1-59 (MPSSMSVRLFTASAAQRKKIQEGDCCVVLAGKTQGRFILIGAVARVSGYIPSYLDKDEL) is modulating. 2 consecutive NR C4-type zinc fingers follow at residues 60–80 (CVVCGDKATGYHYRCITCEGC) and 98–122 (CKYEGKCVIDKVTRNQCQECRFKKC). A DNA-binding region (nuclear receptor) is located at residues 60 to 134 (CVVCGDKATG…VGMATDLVLD (75 aa)). An NR LBD domain is found at 170–414 (EEWELIQVVT…PPLFLEVFED (245 aa)).

The protein belongs to the nuclear hormone receptor family. NR1 subfamily.

The protein resides in the nucleus. Its function is as follows. High affinity receptor for triiodothyronine (T3). This chain is Thyroid hormone receptor beta-B (thrb-b), found in Xenopus laevis (African clawed frog).